The primary structure comprises 84 residues: LYR motif-containing protein 5B (84 aa).

Belongs to the complex I LYR family.

This is LYR motif-containing protein 5B (lyrm5b) from Danio rerio (Zebrafish).